A 623-amino-acid polypeptide reads, in one-letter code: DEAD-box ATP-dependent RNA helicase 52C (623 aa).

Residues 1 to 120 (MATPSRTSWA…DGDAAAGAGD (120 aa)) form a disordered region. A compositionally biased stretch (low complexity) spans 10–29 (ADVADADPAPAPAPAANGPA). Residues 54–69 (APPPSSSSSSAPPPRA) are compositionally biased toward pro residues. Positions 70–83 (APGLLAPRPAAAGM) are enriched in low complexity. Gly residues predominate over residues 84–97 (GRMGGGGGGGGFGG). The Q motif motif lies at 155-183 (GTFAEIDLGQALNDNIRRCKYVRPTPVQR). The region spanning 186 to 372 (IPISLAGRDL…SDFLENYIFL (187 aa)) is the Helicase ATP-binding domain. An ATP-binding site is contributed by 199–206 (AQTGSGKT). Positions 316–319 (DEAD) match the DEAD box motif. The region spanning 399–550 (HLMDLLHAQR…EVPAWLSRYA (152 aa)) is the Helicase C-terminal domain. Residues 553–595 (PSYGGGGGRNRRSGGGSRFGGRDFRRDSSSGRGGGDYYGGGSS) are disordered. Gly residues predominate over residues 555 to 571 (YGGGGGRNRRSGGGSRF). Positions 572–581 (GGRDFRRDSS) are enriched in basic and acidic residues. Residues 583–595 (GRGGGDYYGGGSS) are compositionally biased toward gly residues.

Belongs to the DEAD box helicase family. DDX3/DED1 subfamily.

It catalyses the reaction ATP + H2O = ADP + phosphate + H(+). The polypeptide is DEAD-box ATP-dependent RNA helicase 52C (Oryza sativa subsp. japonica (Rice)).